Reading from the N-terminus, the 88-residue chain is Small ribosomal subunit protein uS15c (88 aa).

The protein belongs to the universal ribosomal protein uS15 family. As to quaternary structure, part of the 30S ribosomal subunit.

It localises to the plastid. It is found in the chloroplast. The polypeptide is Small ribosomal subunit protein uS15c (rps15) (Arabidopsis thaliana (Mouse-ear cress)).